We begin with the raw amino-acid sequence, 114 residues long: Phycoerythrin alpha-1 subunit (114 aa).

(2R,3E)-phycoerythrobilin is bound by residues D52, S53, E63, R64, C67, T72, K74, A75, and K84.

It belongs to the phycoerythrin family. Heterotetramer of 2 different alpha chains and 2 identical beta chains which form 2 alpha-beta heterodimers within the heterotetramer. The two alpha-beta heterodimers are rotated to an open configuration in contrast to the closed configuration found in other cryptophyte species due to the insertion of a single amino acid, Asp-65, in a conserved region of the alpha chain. In the open form, the central chromophores are not in physical contact but are separated by a water-filled channel. Post-translationally, contains three phycoerythrobilin chromophores with binding mediated by both the alpha and beta subunits.

Its subcellular location is the plastid. It is found in the chloroplast thylakoid membrane. Functionally, light-harvesting photosynthetic tetrapyrrole chromophore-protein from the phycobiliprotein complex. The protein is Phycoerythrin alpha-1 subunit of Hemiselmis andersenii (Cryptophyte alga).